The chain runs to 108 residues: Nucleoid-associated protein Mmwyl1_2533 (108 aa).

Residues 1–22 (MFKGGMGNMMRQAQQMQENMQK) are disordered. A compositionally biased stretch (polar residues) spans 11–22 (RQAQQMQENMQK).

This sequence belongs to the YbaB/EbfC family. Homodimer.

It localises to the cytoplasm. The protein localises to the nucleoid. In terms of biological role, binds to DNA and alters its conformation. May be involved in regulation of gene expression, nucleoid organization and DNA protection. The polypeptide is Nucleoid-associated protein Mmwyl1_2533 (Marinomonas sp. (strain MWYL1)).